The primary structure comprises 550 residues: Formin-binding protein 1-like (550 aa).

Residues 1–263 (MSWGTELWDQ…AAKSVDERRD (263 aa)) enclose the F-BAR domain. 2 coiled-coil regions span residues 66 to 258 (FTSC…AKSV) and 334 to 426 (LEDF…QRSE). The REM-1 domain maps to 339–416 (HLPPEQRRKR…IHKNEAWLSE (78 aa)). Over residues 423–432 (QRSERRHSAE) the composition is skewed to basic and acidic residues. A disordered region spans residues 423-467 (QRSERRHSAEANHLVAQGRESPEGSYTEDANQEGRVQPQPHAHPE). The region spanning 479-540 (PAIGHCKSLY…PTSYIDITLE (62 aa)) is the SH3 domain.

It belongs to the FNBP1 family. In terms of assembly, homodimerizes, the dimers can polymerize end-to-end to form filamentous structures. Interacts with GTP-bound cdc42 and wasl/n-wasp.

The protein localises to the cytoplasm. The protein resides in the cytoskeleton. It localises to the cell cortex. Its subcellular location is the cytoplasmic vesicle. It is found in the cell membrane. In terms of biological role, required to coordinate membrane tubulation with reorganization of the actin cytoskeleton during endocytosis. Promotes cdc42-induced actin polymerization by activating the wasl-waspip complex, the predominant form of wasl/n-wasp in cells. Essential for autophagy of intracellular bacterial pathogens. The protein is Formin-binding protein 1-like (fnbp1l) of Xenopus tropicalis (Western clawed frog).